The chain runs to 232 residues: Flagellar L-ring protein (232 aa).

An N-terminal signal peptide occupies residues 1–15; the sequence is MKKVLFYVLPFAFFG. Cysteine 16 is lipidated: N-palmitoyl cysteine. A lipid anchor (S-diacylglycerol cysteine) is attached at cysteine 16.

It belongs to the FlgH family. In terms of assembly, the basal body constitutes a major portion of the flagellar organelle and consists of four rings (L,P,S, and M) mounted on a central rod.

Its subcellular location is the cell outer membrane. It localises to the bacterial flagellum basal body. In terms of biological role, assembles around the rod to form the L-ring and probably protects the motor/basal body from shearing forces during rotation. The chain is Flagellar L-ring protein from Campylobacter jejuni subsp. doylei (strain ATCC BAA-1458 / RM4099 / 269.97).